The following is a 773-amino-acid chain: Polymeric immunoglobulin receptor (773 aa).

A signal peptide spans Met1–Ala18. The Extracellular portion of the chain corresponds to Gln19–Lys647. The 107-residue stretch at Pro25–Leu131 folds into the Ig-like V-type 1; required for binding to polymeric IgA and IgM domain. Intrachain disulfides connect Cys46-Cys115, Cys155-Cys225, Cys260-Cys324, Cys369-Cys438, and Cys478-Cys538. The N-linked (GlcNAc...) asparagine; in variant N-88 glycan is linked to Lys88. An N-linked (GlcNAc...) asparagine glycan is attached at Asn108. Ig-like V-type domains lie at Pro138–Thr232, Ala233–Arg340, Arg352–Val455, and Pro461–Thr557. Asn418 carries N-linked (GlcNAc...) asparagine glycosylation. The tract at residues Ala619 to Gly641 is disordered. Residues Ala632–Gly641 are compositionally biased toward low complexity. A helical transmembrane segment spans residues Val648–Ala670. The Cytoplasmic portion of the chain corresponds to Arg671–Ala773. Phosphoserine occurs at positions 682, 691, 698, and 744. The interval Ala725–Glu746 is disordered. The span at Glu735–Glu746 shows a compositional bias: basic and acidic residues.

In terms of assembly, interacts (mainly via CDR1-like domain) with dimeric IgA. Interacts (mainly via CDR2-like domain) with pentameric IgM. As to quaternary structure, either free or part of the secretory IgA (sIgA) complex that consists of two, four or five IgA monomers, and two additional non-Ig polypeptides, namely the JCHAIN and the secretory component (the proteolytic product of PIGR). Free secretory component interacts with bacterial antigens toxA of C.difficile and eae of E.coli. In terms of processing, N-glycosylated. N-glycosylation is required for anchoring IgA molecules to mucus, but is not necessary for Ig binding.

It localises to the cell membrane. It is found in the secreted. Its function is as follows. Mediates selective transcytosis of polymeric IgA and IgM across mucosal epithelial cells. Binds polymeric IgA and IgM at the basolateral surface of epithelial cells. The complex is then transported across the cell to be secreted at the apical surface. During this process, a cleavage occurs that separates the extracellular (known as the secretory component) from the transmembrane segment. Through its N-linked glycans ensures anchoring of secretory IgA (sIgA) molecules to mucus lining the epithelial surface to neutralize extracellular pathogens. On its own (free form) may act as a non-specific microbial scavenger to prevent pathogen interaction with epithelial cells. The sequence is that of Polymeric immunoglobulin receptor (PIGR) from Oryctolagus cuniculus (Rabbit).